A 271-amino-acid polypeptide reads, in one-letter code: L-aspartate dehydrogenase (271 aa).

The NAD(+) site is built by Ala124 and Asn192. His222 is a catalytic residue.

It belongs to the L-aspartate dehydrogenase family.

It carries out the reaction L-aspartate + NADP(+) + H2O = oxaloacetate + NH4(+) + NADPH + H(+). The enzyme catalyses L-aspartate + NAD(+) + H2O = oxaloacetate + NH4(+) + NADH + H(+). It functions in the pathway cofactor biosynthesis; NAD(+) biosynthesis; iminoaspartate from L-aspartate (dehydrogenase route): step 1/1. In terms of biological role, specifically catalyzes the NAD or NADP-dependent dehydrogenation of L-aspartate to iminoaspartate. This Methanosarcina mazei (strain ATCC BAA-159 / DSM 3647 / Goe1 / Go1 / JCM 11833 / OCM 88) (Methanosarcina frisia) protein is L-aspartate dehydrogenase.